A 276-amino-acid polypeptide reads, in one-letter code: 2-dehydro-3-deoxyphosphooctonate aldolase (276 aa).

The protein belongs to the KdsA family.

The protein resides in the cytoplasm. It carries out the reaction D-arabinose 5-phosphate + phosphoenolpyruvate + H2O = 3-deoxy-alpha-D-manno-2-octulosonate-8-phosphate + phosphate. It participates in carbohydrate biosynthesis; 3-deoxy-D-manno-octulosonate biosynthesis; 3-deoxy-D-manno-octulosonate from D-ribulose 5-phosphate: step 2/3. Its pathway is bacterial outer membrane biogenesis; lipopolysaccharide biosynthesis. This chain is 2-dehydro-3-deoxyphosphooctonate aldolase, found in Helicobacter pylori (strain HPAG1).